A 311-amino-acid chain; its full sequence is Prohibitin-2 (311 aa).

A helical membrane pass occupies residues 39-57; the sequence is GAGMGLAGLVLLGGAAFVA. The AIM signature appears at 141-144; sequence YRTL.

It belongs to the prohibitin family. The mitochondrial prohibitin complex consists of two subunits (PHB1 and PHB2). The subunits assemble into a membrane-associated ring-shaped supercomplex of approximately 1 mDa. Interacts with ATG24/SNX4; the interaction is direct and plays a role in mitophagy.

Its subcellular location is the mitochondrion inner membrane. Prohibitin probably acts as a holdase/unfoldase for the stabilization of newly synthesized mitochondrial proteins. Involved in mitophagy. Required for the switch to necrotrophic growth. In Colletotrichum higginsianum (strain IMI 349063) (Crucifer anthracnose fungus), this protein is Prohibitin-2.